Reading from the N-terminus, the 515-residue chain is Maturase K (515 aa).

It belongs to the intron maturase 2 family. MatK subfamily.

It localises to the plastid. The protein resides in the chloroplast. Functionally, usually encoded in the trnK tRNA gene intron. Probably assists in splicing its own and other chloroplast group II introns. The polypeptide is Maturase K (Picea mariana (Black spruce)).